A 45-amino-acid chain; its full sequence is MEYVKFLEDYVREKVKKMFSSNVKLSFNDLKVSAKIVELKKRGVK.

This is an uncharacterized protein from Methanocaldococcus jannaschii (strain ATCC 43067 / DSM 2661 / JAL-1 / JCM 10045 / NBRC 100440) (Methanococcus jannaschii).